The sequence spans 505 residues: Glutamyl-tRNA(Gln) amidotransferase subunit A, mitochondrial (505 aa).

Residues K76 and S158 each act as charge relay system in the active site. The Acyl-ester intermediate role is filled by S182.

It belongs to the amidase family. GatA subfamily. As to quaternary structure, subunit of the heterotrimeric GatCAB amidotransferase (AdT) complex, composed of A, B and C subunits.

It is found in the mitochondrion. It catalyses the reaction L-glutamyl-tRNA(Gln) + L-glutamine + ATP + H2O = L-glutaminyl-tRNA(Gln) + L-glutamate + ADP + phosphate + H(+). Its function is as follows. Allows the formation of correctly charged Gln-tRNA(Gln) through the transamidation of misacylated Glu-tRNA(Gln) in the mitochondria. The reaction takes place in the presence of glutamine and ATP through an activated gamma-phospho-Glu-tRNA(Gln). The polypeptide is Glutamyl-tRNA(Gln) amidotransferase subunit A, mitochondrial (Ixodes scapularis (Black-legged tick)).